Reading from the N-terminus, the 186-residue chain is Methylamine dehydrogenase light chain (186 aa).

The segment at residues 1-57 (MKKNTGFDSGIEKLARKTASKTGRRSFIGKLGGFLVGSALLPLLPVDRRGRMNEAHA) is a signal peptide (tat-type signal). Disulfide bonds link Cys78-Cys143, Cys84-Cys116, Cys91-Cys176, Cys93-Cys141, Cys101-Cys132, and Cys133-Cys164. The residue at position 112 (Trp112) is a Tryptophylquinone. A cross-link (tryptophan tryptophylquinone (Trp-Trp)) is located at residues 112–163 (WVASCFNPGDGQTYLIAYRDCCGKQTCGRCNCVNVQGELPVYRPEFNNDIVW).

This sequence belongs to the aromatic amine dehydrogenase light chain family. As to quaternary structure, heterotetramer of two light and two heavy chains. Tryptophan tryptophylquinone residue is required as a cofactor. In terms of processing, predicted to be exported by the Tat system. The position of the signal peptide cleavage has not been experimentally proven. Post-translationally, tryptophan tryptophylquinone (TTQ) is formed by oxidation of the indole ring of a tryptophan to form tryptophylquinone followed by covalent cross-linking with another tryptophan residue.

It localises to the periplasm. The enzyme catalyses 2 oxidized [amicyanin] + methylamine + H2O = 2 reduced [amicyanin] + formaldehyde + NH4(+) + 2 H(+). It participates in one-carbon metabolism; methylamine degradation; formaldehyde from methylamine: step 1/1. In terms of biological role, methylamine dehydrogenase carries out the oxidation of methylamine. Electrons are passed from methylamine dehydrogenase to amicyanin. The chain is Methylamine dehydrogenase light chain (mauA) from Methylobacillus flagellatus (strain ATCC 51484 / DSM 6875 / VKM B-1610 / KT).